Consider the following 109-residue polypeptide: MFGKGGMGNLMKQAQQMQERMQKLQEEIAXMEVVGESGAGLVKVTITGSHSVRRVNIDESLMEDDKEMLEDLIAAAFNDAARRVEETQKEKMAAITGGMQLPPGMKMPF.

Belongs to the YbaB/EbfC family. In terms of assembly, homodimer.

The protein resides in the cytoplasm. It is found in the nucleoid. Binds to DNA and alters its conformation. May be involved in regulation of gene expression, nucleoid organization and DNA protection. In Vibrio vulnificus (strain CMCP6), this protein is Nucleoid-associated protein VV1_2004.